Reading from the N-terminus, the 200-residue chain is DNA dC-&gt;dU-editing enzyme APOBEC-3H (200 aa).

Residues 4–126 enclose the CMP/dCMP-type deaminase domain; that stretch reads LTAETFRLQF…KPQQKGLRLL (123 aa). His-54 lines the Zn(2+) pocket. Glu-56 (proton donor) is an active-site residue. Zn(2+) contacts are provided by Cys-85 and Cys-88. The stretch at 160–182 forms a coiled coil; the sequence is YKMLEELDKNSRAIKRRLERIKI.

The protein belongs to the cytidine and deoxycytidylate deaminase family. As to quaternary structure, homodimer. Interacts with AGO1, AGO2 and AGO3. The cofactor is Zn(2+). (Microbial infection) Following infection by some HIV-1 strains, such as isolate BRU/LAI, can be ubiquitinated by a cullin-5-RING E3 ubiquitin-protein ligase complex (ECS complex) hijacked by the HIV-1 Vif protein, leading to its degradation. Ubiquitination by the ECS complex is however less efficent compared to APOBEC3G or APOBEC3G. In terms of tissue distribution, expressed in lymphoid organs. Also detected in non-lymphoid tissues including lung, testis, ovary, fetal liver and skin.

It localises to the cytoplasm. The protein resides in the nucleus. It is found in the P-body. It catalyses the reaction a 2'-deoxycytidine in single-stranded DNA + H2O + H(+) = a 2'-deoxyuridine in single-stranded DNA + NH4(+). APOBEC3H activity is regulated by RNA. While RNA-binding inhibits the DNA deaminase activity, double-stranded RNA is required for HIV-1 restriction by promoting APOBEC3H homodimerization and packaging into retroviral nucleocapsids. With respect to regulation, (Microbial infection) Antiviral activity is inhibited to some extent by the HIV-1 virion infectivity factor (VIF), that prevents its incorporation into progeny virions by both inhibiting its translation and/or by inducing its ubiquitination and subsequent degradation by the 26S proteasome. DNA deaminase (cytidine deaminase) which acts as an inhibitor of retrovirus replication and retrotransposon mobility via deaminase-dependent and -independent mechanisms. The A3H-var/haplotype 2 exhibits antiviral activity against vif-deficient HIV-1. After the penetration of retroviral nucleocapsids into target cells of infection and the initiation of reverse transcription, it can induce the conversion of cytosine to uracil in the minus-sense single-strand viral DNA, leading to G-to-A hypermutations in the subsequent plus-strand viral DNA. The resultant detrimental levels of mutations in the proviral genome, along with a deamination-independent mechanism that works prior to the proviral integration, together exert efficient antiretroviral effects in infected target cells. Selectively targets single-stranded DNA and does not deaminate double-stranded DNA or single- or double-stranded RNA. Exhibits antiviral activity also against T-cell leukemia virus type 1 (HTLV-1) and may inhibit the mobility of LTR and non-LTR retrotransposons. The sequence is that of DNA dC-&gt;dU-editing enzyme APOBEC-3H from Homo sapiens (Human).